Reading from the N-terminus, the 366-residue chain is Probable glucuronokinase 2 (366 aa).

126-136 (PRQTGLSGSSA) serves as a coordination point for ATP. Asp179 acts as the Proton acceptor in catalysis.

The protein belongs to the GHMP kinase family. Mg(2+) serves as cofactor. The cofactor is Mn(2+). It depends on Co(2+) as a cofactor.

The enzyme catalyses D-glucuronate + ATP = 1-phospho-alpha-D-glucuronate + ADP + H(+). Functionally, sugar-1-kinase with a strict substrate specificity for D-glucuronic acid and ATP. Involved in the biosynthesis of UDP-glucuronic acid (UDP-GlcA), providing nucleotide sugars for cell-wall polymers. May be also involved in a salvage pathway for glucuronic acid. In Arabidopsis thaliana (Mouse-ear cress), this protein is Probable glucuronokinase 2 (GLCAK2).